We begin with the raw amino-acid sequence, 475 residues long: UDP-N-acetylmuramate--L-alanine ligase (475 aa).

An ATP-binding site is contributed by 125-131 (GTHGKTT).

It belongs to the MurCDEF family.

The protein resides in the cytoplasm. It carries out the reaction UDP-N-acetyl-alpha-D-muramate + L-alanine + ATP = UDP-N-acetyl-alpha-D-muramoyl-L-alanine + ADP + phosphate + H(+). The protein operates within cell wall biogenesis; peptidoglycan biosynthesis. Its function is as follows. Cell wall formation. This Glaesserella parasuis serovar 5 (strain SH0165) (Haemophilus parasuis) protein is UDP-N-acetylmuramate--L-alanine ligase.